A 469-amino-acid chain; its full sequence is 3-isopropylmalate dehydratase large subunit (469 aa).

Positions 349, 409, and 412 each coordinate [4Fe-4S] cluster.

Belongs to the aconitase/IPM isomerase family. LeuC type 1 subfamily. As to quaternary structure, heterodimer of LeuC and LeuD. Requires [4Fe-4S] cluster as cofactor.

The enzyme catalyses (2R,3S)-3-isopropylmalate = (2S)-2-isopropylmalate. It functions in the pathway amino-acid biosynthesis; L-leucine biosynthesis; L-leucine from 3-methyl-2-oxobutanoate: step 2/4. In terms of biological role, catalyzes the isomerization between 2-isopropylmalate and 3-isopropylmalate, via the formation of 2-isopropylmaleate. In Methylorubrum extorquens (strain CM4 / NCIMB 13688) (Methylobacterium extorquens), this protein is 3-isopropylmalate dehydratase large subunit.